A 98-amino-acid polypeptide reads, in one-letter code: UPF0251 protein Sputw3181_3483 (98 aa).

It belongs to the UPF0251 family.

This Shewanella sp. (strain W3-18-1) protein is UPF0251 protein Sputw3181_3483.